A 201-amino-acid chain; its full sequence is Dephospho-CoA kinase (201 aa).

The DPCK domain maps to 4–201 (TIGLTGGIAS…ILKQWDALEK (198 aa)). 12-17 (ASGKST) is an ATP binding site.

Belongs to the CoaE family.

The protein resides in the cytoplasm. The catalysed reaction is 3'-dephospho-CoA + ATP = ADP + CoA + H(+). Its pathway is cofactor biosynthesis; coenzyme A biosynthesis; CoA from (R)-pantothenate: step 5/5. Functionally, catalyzes the phosphorylation of the 3'-hydroxyl group of dephosphocoenzyme A to form coenzyme A. This Geobacillus kaustophilus (strain HTA426) protein is Dephospho-CoA kinase.